The following is a 198-amino-acid chain: Ribonuclease HII (198 aa).

The RNase H type-2 domain occupies 2 to 191 (VLECGVDETG…IRELLVGKDN (190 aa)). Positions 8, 9, and 100 each coordinate a divalent metal cation.

This sequence belongs to the RNase HII family. It depends on Mn(2+) as a cofactor. The cofactor is Mg(2+).

The protein localises to the cytoplasm. The enzyme catalyses Endonucleolytic cleavage to 5'-phosphomonoester.. Its function is as follows. Endonuclease that specifically degrades the RNA of RNA-DNA hybrids. The protein is Ribonuclease HII of Desulforamulus reducens (strain ATCC BAA-1160 / DSM 100696 / MI-1) (Desulfotomaculum reducens).